Here is a 2635-residue protein sequence, read N- to C-terminus: Protein unc-79 homolog (2635 aa).

2 positions are modified to phosphoserine: serine 754 and serine 758. Disordered stretches follow at residues 907–929, 1538–1575, 1607–1678, 1693–1832, 1863–1909, and 1929–1950; these read GPEGEEEENPASKHGENPGNCTE, IAQRPNDPGRSRQNSATRPDNSEIPENPAMEGFPDARR, LIDL…SVLS, SKDF…FKIQ, LGEQ…TQYR, and LEHQSSAPHNISNWDTEQIQPG. Residues 1666–1678 are compositionally biased toward low complexity; it reads SSPSVPSHPSVLS. Residues 1699-1713 show a composition bias toward polar residues; the sequence is KDSGNNQSAGNTDSA. A compositionally biased stretch (basic and acidic residues) spans 1761 to 1775; that stretch reads LDDHPDPGTEGEKPG. Composition is skewed to polar residues over residues 1897-1909 and 1929-1947; these read ETSSHSSISTQYR and LEHQSSAPHNISNWDTEQI. 2 helical membrane-spanning segments follow: residues 2223–2243 and 2466–2486; these read LLSFVIQNAVFTLAYLVELCG and VLHMCSLFHAFIFAQLWTVYC.

Belongs to the unc-79 family. NALCN complex consists of NALCN and auxiliary subunits, UNC79, UNC80 and NACL1. These auxiliary subunits are essential for the NALCN channel function. UNC80 bridges NALCN to UNC79.

It is found in the cell membrane. Functionally, auxiliary subunit of the NALCN sodium channel complex, a voltage-gated ion channel responsible for the resting Na(+) permeability that controls neuronal excitability. Activated by neuropeptides substance P, neurotensin, and extracellular calcium that regulates neuronal excitability by controlling the sizes of NALCN-dependent sodium-leak current. This chain is Protein unc-79 homolog (UNC79), found in Homo sapiens (Human).